The sequence spans 452 residues: Transcription factor AP-2-delta (452 aa).

Serine 239 carries the post-translational modification Phosphoserine; by PKA. An H-S-H (helix-span-helix), dimerization region spans residues 280-410; the sequence is RRKAANVTLL…VLSEMLNYLE (131 aa). Positions 416–452 are disordered; that stretch reads KNGGAADSGQGHANSEKAPLRKTSEAAVKEGKTEKTD. Residues 429 to 452 show a composition bias toward basic and acidic residues; it reads NSEKAPLRKTSEAAVKEGKTEKTD.

It belongs to the AP-2 family. In terms of assembly, binds DNA as a dimer. Can form homodimers or heterodimers with other AP-2 family members. As to expression, highly expressed in brain, placenta, skeletal muscle, thymus, small intestine, and prostate, and expressed at lower levels in leukocyte, spleen, testis, ovary and colon. Barely detectable in heart, kidney, liver, lung or pancreas.

It is found in the nucleus. Functionally, sequence-specific DNA-binding protein that interacts with inducible viral and cellular enhancer elements to regulate transcription of selected genes. AP-2 factors bind to the consensus sequence 5'-GCCNNNGGC-3' and activate genes involved in a large spectrum of important biological functions including proper eye, face, body wall, limb and neural tube development. They also suppress a number of genes including MCAM/MUC18, C/EBP alpha and MYC. This chain is Transcription factor AP-2-delta, found in Homo sapiens (Human).